Reading from the N-terminus, the 71-residue chain is Putative defensin-like protein 303 (71 aa).

Residues 1 to 25 (MKSNKATFFLGLLLVYAFCIMLIES) form the signal peptide. Disulfide bonds link Cys-27–Cys-45, Cys-33–Cys-50, and Cys-39–Cys-52.

Belongs to the DEFL family.

It localises to the secreted. This chain is Putative defensin-like protein 303, found in Arabidopsis thaliana (Mouse-ear cress).